The primary structure comprises 347 residues: Chlorophyllase type 0 (347 aa).

An N-terminal signal peptide occupies residues M1–A19. Positions Q20–N30 are excised as a propeptide. Residues G160–G164 carry the GXSXG motif. Catalysis depends on S162, which acts as the Nucleophile. D191 serves as the catalytic Charge relay system. N-linked (GlcNAc...) asparagine glycans are attached at residues N215, N229, and N251. H262 (charge relay system) is an active-site residue. The N-linked (GlcNAc...) asparagine glycan is linked to N321.

It belongs to the AB hydrolase superfamily. Lipase family.

It catalyses the reaction a chlorophyll + H2O = a chlorophyllide + phytol + H(+). It carries out the reaction chlorophyll a + H2O = phytol + chlorophyllide a + H(+). Its pathway is porphyrin-containing compound metabolism; chlorophyll degradation. Inhibited by diisopropyl fluorophosphate (DFP), phenylmethanesulfonyl fluoride (PMSF) or p-chloromercuribenzoic acid (PCMB), but not by N-ethylmaleimide (NEM) or iodoacetamide. Catalyzes the hydrolysis of ester bond in chlorophyll to yield chlorophyllide and phytol. This chain is Chlorophyllase type 0, found in Chenopodium album (Fat hen).